The following is a 122-amino-acid chain: MERQQQLLAAYQQIHSLSSQMIALAQTERWEDLVELELAYVTAVESTAAFTGQAGPSMALQELLRNKLQQILDNETELKRLLQQRMDQLKELIGQSTRQNVVNSTYGQFNDRALLLGEPQIR.

Positions 1–50 (MERQQQLLAAYQQIHSLSSQMIALAQTERWEDLVELELAYVTAVESTAAF) are required for homodimerization. Residues 60–98 (LQELLRNKLQQILDNETELKRLLQQRMDQLKELIGQSTR) are fliD binding.

The protein belongs to the FliT family. In terms of assembly, homodimer. Interacts with FliD and FlhC.

Its subcellular location is the cytoplasm. The protein localises to the cytosol. Its function is as follows. Dual-function protein that regulates the transcription of class 2 flagellar operons and that also acts as an export chaperone for the filament-capping protein FliD. As a transcriptional regulator, acts as an anti-FlhDC factor; it directly binds FlhC, thus inhibiting the binding of the FlhC/FlhD complex to class 2 promoters, resulting in decreased expression of class 2 flagellar operons. As a chaperone, effects FliD transition to the membrane by preventing its premature polymerization, and by directing it to the export apparatus. The polypeptide is Flagellar protein FliT (Serratia proteamaculans (strain 568)).